Consider the following 371-residue polypeptide: Protein OSB2, chloroplastic (371 aa).

The transit peptide at 1-20 (MSLISKSLARIECSPFFYPR) directs the protein to the chloroplast. The tract at residues 45 to 64 (GKTGNGERKQRAKAPAKTPE) is disordered. In terms of domain architecture, SSB spans 97-195 (VANWVNLIGF…VLVQNLNFIQ (99 aa)). PDF region regions lie at residues 237–289 (WNHL…PKLE) and 312–360 (WKDL…PKLP).

In terms of tissue distribution, expressed in the floral abscission zone.

The protein resides in the plastid. It is found in the chloroplast. Binds preferentially single-stranded DNA. Does not bind to RNA. In Arabidopsis thaliana (Mouse-ear cress), this protein is Protein OSB2, chloroplastic (OSB2).